Here is a 201-residue protein sequence, read N- to C-terminus: Ras-related protein Rab-1B (201 aa).

Met1 is modified (N-acetylmethionine). GTP is bound by residues Ser17, Gly18, Val19, Gly20, Lys21, Ser22, Cys23, Tyr33, Thr34, Glu35, Ser36, Ser39, and Thr40. Ser22 lines the Mg(2+) pocket. Residues 30 to 45 carry the Switch 1 motif; that stretch reads DDTYTESYISTIGVDF. Mg(2+) is bound by residues Thr40 and Asp63. A switch 2 region; required for interaction with REP1/CHM region spans residues 64–83; it reads TAGQERFRTVTSSYYRGAHG. A Switch 2 motif is present at residues 65–80; sequence AGQERFRTVTSSYYRG. Positions 66, 121, 122, 124, 151, 152, and 153 each coordinate GTP. The disordered stretch occupies residues 173 to 201; that stretch reads MGPGAASGGERPNLKIDSTPVKSASGGCC. Residues Cys200 and Cys201 are each lipidated (S-geranylgeranyl cysteine). Cysteine methyl ester is present on Cys201.

Belongs to the small GTPase superfamily. Rab family. In terms of assembly, interacts with MICAL1 and MICAL2. Interacts (in GTP-bound form) with MICALCL, MICAL1 and MILCAL3. Interacts with GDI1; the interaction requires the GDP-bound state. Interacts with CHM/REP1; the interaction requires the GDP-bound form and is necessary for prenylation by GGTase II. Interacts with RabGAP TBC1D20. Interacts (in GDP-bound form) with lipid phosphatase MTMR6 (via GRAM domain); the interaction regulates MTMR6 recruitment to the endoplasmic reticulum-Golgi intermediate compartment. Interacts (in GDP-bound form) with lipid phosphatase MTMR7. Mg(2+) is required as a cofactor. Prenylated; by GGTase II, only after interaction of the substrate with Rab escort protein 1 (REP1).

The protein localises to the cytoplasm. Its subcellular location is the membrane. It is found in the preautophagosomal structure membrane. The protein resides in the perinuclear region. It catalyses the reaction GTP + H2O = GDP + phosphate + H(+). Its activity is regulated as follows. Regulated by guanine nucleotide exchange factors (GEFs) which promote the exchange of bound GDP for free GTP. Regulated by GTPase activating proteins (GAPs) including TBC1D20 which increases the GTP hydrolysis activity. Inhibited by GDP dissociation inhibitors (GDIs). In terms of biological role, the small GTPases Rab are key regulators of intracellular membrane trafficking, from the formation of transport vesicles to their fusion with membranes. Rabs cycle between an inactive GDP-bound form and an active GTP-bound form that is able to recruit to membranes different set of downstream effectors directly responsible for vesicle formation, movement, tethering and fusion. Plays a role in the initial events of the autophagic vacuole development which take place at specialized regions of the endoplasmic reticulum. Regulates vesicular transport between the endoplasmic reticulum and successive Golgi compartments. Required to modulate the compacted morphology of the Golgi. Promotes the recruitment of lipid phosphatase MTMR6 to the endoplasmic reticulum-Golgi intermediate compartment. The polypeptide is Ras-related protein Rab-1B (Rab1b) (Rattus norvegicus (Rat)).